The primary structure comprises 421 residues: Aspartokinase (421 aa).

7-10 (KYGG) is an ATP binding site. 25-30 (RIVATK) is a substrate binding site. Residue serine 41 coordinates ATP. Residues 45 to 49 (DTTDD), glutamate 74, 125 to 126 (LE), 151 to 154 (RGGS), and serine 154 each bind substrate. ATP is bound by residues 174–175 (TD), 180–185 (FSADPR), and lysine 210. 2 consecutive ACT domains span residues 267–348 (VTIV…GKVS) and 349–421 (LIGA…GTGR). Residues aspartate 274, 274–279 (DIPGYA), 292–294 (NID), glutamine 298, 360–361 (VT), 374–375 (NI), and 381–382 (SE) each bind substrate.

The protein belongs to the aspartokinase family. As to quaternary structure, heterotetramer consisting of 2 isoforms Alpha (catalytic and regulation) and of a homodimer of 2 isoforms Beta (regulation).

It carries out the reaction L-aspartate + ATP = 4-phospho-L-aspartate + ADP. The protein operates within amino-acid biosynthesis; L-lysine biosynthesis via DAP pathway; (S)-tetrahydrodipicolinate from L-aspartate: step 1/4. Its pathway is amino-acid biosynthesis; L-methionine biosynthesis via de novo pathway; L-homoserine from L-aspartate: step 1/3. It functions in the pathway amino-acid biosynthesis; L-threonine biosynthesis; L-threonine from L-aspartate: step 1/5. With respect to regulation, feedback inhibition by lysine and threonine. Catalyzes the phosphorylation of the beta-carboxyl group of aspartic acid with ATP to yield 4-phospho-L-aspartate, which is involved in the branched biosynthetic pathway leading to the biosynthesis of amino acids lysine, threonine, isoleucine and methionine. The chain is Aspartokinase (ask) from Mycobacterium bovis (strain ATCC BAA-935 / AF2122/97).